The chain runs to 522 residues: Secreted RxLR effector protein 105 (522 aa).

The N-terminal stretch at 1–21 is a signal peptide; the sequence is MRGPCSVITALLVVASSQIAA. The short motif at 48–63 is the RxLR-dEER element; sequence RYLRGSQHVLDSNEER.

This sequence belongs to the RxLR effector family.

It localises to the secreted. The protein resides in the host nucleus. It is found in the host cytoplasm. Functionally, secreted effector that dos not suppress the host cell death induced by cell death-inducing proteins. The polypeptide is Secreted RxLR effector protein 105 (Plasmopara viticola (Downy mildew of grapevine)).